A 221-amino-acid polypeptide reads, in one-letter code: Type II secretion system protein J (221 aa).

Positions 1–15 are cleaved as a propeptide — leader sequence; that stretch reads MWRTNQVSSRQNMAG. Phe16 is subject to N-methylphenylalanine. The chain crosses the membrane as a helical span at residues 16-36; that stretch reads FTLIEVLVAIAIFASLSVGAY.

It belongs to the GSP J family. Type II secretion is composed of four main components: the outer membrane complex, the inner membrane complex, the cytoplasmic secretion ATPase and the periplasm-spanning pseudopilus. Interacts with core component epsG. Post-translationally, cleaved by prepilin peptidase. In terms of processing, methylated by prepilin peptidase at the amino group of the N-terminal phenylalanine once the leader sequence is cleaved by prepilin peptidase.

It is found in the cell inner membrane. In terms of biological role, component of the type II secretion system required for the energy-dependent secretion of extracellular factors such as proteases and toxins from the periplasm. Part of the pseudopilus tip complex that is critical for the recognition and binding of secretion substrates. The protein is Type II secretion system protein J (epsJ) of Vibrio cholerae serotype O1 (strain ATCC 39315 / El Tor Inaba N16961).